The sequence spans 352 residues: MQTLSSILRTIAPLDSKAMARATTRLDGLLKPQGSLGRLEQLAIQLAGMRGLYGHQVDRKQIIVMAADHGVYDEGVAISPRVVTMVQALNMVRGVTGVCVLAANAGAEVKIVDVGIDSDTLPGVIDMKVARGSGNIARGAAMTRQQAEDLLIASATLTLQQAAGGVKVFGVGELGMANTTPAAAMVSVFTDSDPELAVGIGANFPSEQLHHKVAVVRRAIETNQPDASDGIDVLAKVGGFDLVGMTGVMLGAAAAGLPVVLDGFLSYASALAACRIEAKVRDYLIPSHLSAEKGAVIALNHLQLEPYLQMGMRLGEGSGAALAMHLVDAACAMYNNMGSLAESNIELPGCVN.

E316 acts as the Proton acceptor in catalysis.

Belongs to the CobT family.

The enzyme catalyses 5,6-dimethylbenzimidazole + nicotinate beta-D-ribonucleotide = alpha-ribazole 5'-phosphate + nicotinate + H(+). It participates in nucleoside biosynthesis; alpha-ribazole biosynthesis; alpha-ribazole from 5,6-dimethylbenzimidazole: step 1/2. Functionally, catalyzes the synthesis of alpha-ribazole-5'-phosphate from nicotinate mononucleotide (NAMN) and 5,6-dimethylbenzimidazole (DMB). The polypeptide is Nicotinate-nucleotide--dimethylbenzimidazole phosphoribosyltransferase (Yersinia enterocolitica serotype O:8 / biotype 1B (strain NCTC 13174 / 8081)).